The following is a 1347-amino-acid chain: BTB/POZ domain-containing protein 1 (1347 aa).

ANK repeat units lie at residues Tyr-51–Val-81 and Ser-86–Ser-115. RCC1 repeat units lie at residues Gly-148–Leu-198, Ser-215–Lys-264, Phe-265–Asp-322, and Asp-324–Gln-372. BTB domains are found at residues Ser-619 to Trp-698 and Met-758 to Phe-829. 4 disordered regions span residues Ser-1006–Asn-1029, Glu-1104–Val-1139, Glu-1193–Ile-1237, and Gly-1286–Lys-1347. Basic and acidic residues predominate over residues Leu-1013–Pro-1023. 2 stretches are compositionally biased toward polar residues: residues Ser-1208–Ile-1237 and Asn-1297–Gln-1306. Basic residues predominate over residues Thr-1336–Lys-1347.

As to quaternary structure, interacts with cul3.

It functions in the pathway protein modification; protein ubiquitination. Its function is as follows. Probable substrate-specific adapter of an E3 ubiquitin-protein ligase complex which mediates the ubiquitination and subsequent proteasomal degradation of target proteins. The sequence is that of BTB/POZ domain-containing protein 1 (btb1) from Schizosaccharomyces pombe (strain 972 / ATCC 24843) (Fission yeast).